Reading from the N-terminus, the 64-residue chain is Large ribosomal subunit protein bL35 (64 aa).

The span at 1-26 (MPKMKSHRGASKRFKRTASGKLKRGR) shows a compositional bias: basic residues. 2 disordered regions span residues 1–28 (MPKMKSHRGASKRFKRTASGKLKRGRAY) and 33–52 (FGNKSTKAKRKLRKASMVSS).

This sequence belongs to the bacterial ribosomal protein bL35 family.

This is Large ribosomal subunit protein bL35 from Exiguobacterium sibiricum (strain DSM 17290 / CCUG 55495 / CIP 109462 / JCM 13490 / 255-15).